A 214-amino-acid polypeptide reads, in one-letter code: A-type ATP synthase subunit D (214 aa).

Belongs to the V-ATPase D subunit family. Has multiple subunits with at least A(3), B(3), C, D, E, F, H, I and proteolipid K(x).

Its subcellular location is the cell membrane. Component of the A-type ATP synthase that produces ATP from ADP in the presence of a proton gradient across the membrane. The polypeptide is A-type ATP synthase subunit D (Pyrococcus abyssi (strain GE5 / Orsay)).